Here is a 286-residue protein sequence, read N- to C-terminus: Flagellar filament 33 kDa core protein (286 aa).

The protein belongs to the bacterial flagellin family. The flagellum consists of an outer layer composed of repeating units of FlaA around a core that contains several antigenically related polypeptides.

Its subcellular location is the periplasmic flagellum. The protein localises to the periplasm. Functionally, component of the core of the flagella. In Treponema phagedenis, this protein is Flagellar filament 33 kDa core protein.